Reading from the N-terminus, the 395-residue chain is F-box/kelch-repeat protein SKIP25 (395 aa).

Residues 1–29 (MEKKLKRRESMSTTAAESPPAKRRRTVTG) form a disordered region. The 46-residue stretch at 34–79 (ALIEGLPDHISEICLSLVHRPSLLSAVCTRWRRLLYSPEFPSFPSL) folds into the F-box domain. Kelch repeat units follow at residues 81–129 (ALFV…YRHP), 147–194 (LILI…ACDG), 196–245 (IYIA…FSRE), 246–299 (AIDA…AMEE), and 301–342 (ILYS…TQVT).

In terms of assembly, part of a SCF (ASK-cullin-F-box) protein ligase complex. Interacts with SKP1A/ASK1.

It is found in the nucleus. It functions in the pathway protein modification; protein ubiquitination. Component of SCF(ASK-cullin-F-box) E3 ubiquitin ligase complexes, which may mediate the ubiquitination and subsequent proteasomal degradation of target proteins. The chain is F-box/kelch-repeat protein SKIP25 (SKIP25) from Arabidopsis thaliana (Mouse-ear cress).